A 135-amino-acid chain; its full sequence is NADPH-dependent 7-cyano-7-deazaguanine reductase (135 aa).

Residue C48 is the Thioimide intermediate of the active site. The Proton donor role is filled by D55. Residues 70-72 and 89-90 each bind substrate; these read IEL and HE.

The protein belongs to the GTP cyclohydrolase I family. QueF type 1 subfamily.

The protein resides in the cytoplasm. It catalyses the reaction 7-aminomethyl-7-carbaguanine + 2 NADP(+) = 7-cyano-7-deazaguanine + 2 NADPH + 3 H(+). It participates in tRNA modification; tRNA-queuosine biosynthesis. Functionally, catalyzes the NADPH-dependent reduction of 7-cyano-7-deazaguanine (preQ0) to 7-aminomethyl-7-deazaguanine (preQ1). This chain is NADPH-dependent 7-cyano-7-deazaguanine reductase, found in Prochlorococcus marinus (strain MIT 9303).